Reading from the N-terminus, the 231-residue chain is PIAGSMVLAAILLKLGGYGMIRIIQILPSSKTDMFIPFITLSLWGAVLANLTCLQQTDLKSLIAYSSISHMGLVVAAISIQTQWSLSGAMALMIAHGFTSSALFCLANTSYERTHTRILILTRGFHNILPMTTTWWLLSNLMNIATPPMMNFTSEFLILSSLFNWCPTTIILLSLSILITSIYSLHIFLSTQMGPTLLNTQTEPAHSREHLLMTLHIIPLILLSMKPELVM.

7 helical membrane passes run 1–21, 34–54, 62–82, 86–106, 118–138, 169–189, and 211–231; these read PIAG…YGMI, MFIP…LTCL, LIAY…SIQT, LSGA…LFCL, ILIL…WWLL, TIIL…HIFL, and LLMT…ELVM.

Belongs to the complex I subunit 4 family.

The protein resides in the mitochondrion membrane. The catalysed reaction is a ubiquinone + NADH + 5 H(+)(in) = a ubiquinol + NAD(+) + 4 H(+)(out). Its function is as follows. Core subunit of the mitochondrial membrane respiratory chain NADH dehydrogenase (Complex I) that is believed to belong to the minimal assembly required for catalysis. Complex I functions in the transfer of electrons from NADH to the respiratory chain. The immediate electron acceptor for the enzyme is believed to be ubiquinone. The chain is NADH-ubiquinone oxidoreductase chain 4 (MT-ND4) from Causus rhombeatus (Rhombic night adder).